A 155-amino-acid polypeptide reads, in one-letter code: uncharacterized protein (155 aa).

Residues 1 to 14 (MLTLSGWITTQVPP) are compositionally biased toward polar residues. The interval 1-44 (MLTLSGWITTQVPPSSRAAADAKAARTGTAEQAEDPAAGTDAAD) is disordered. A compositionally biased stretch (low complexity) spans 17–30 (RAAADAKAARTGTA).

This is an uncharacterized protein from Pseudomonas aeruginosa (strain ATCC 15692 / DSM 22644 / CIP 104116 / JCM 14847 / LMG 12228 / 1C / PRS 101 / PAO1).